The primary structure comprises 372 residues: Glutamate 5-kinase (372 aa).

Lys-14 lines the ATP pocket. Residues Ser-54, Asp-141, and Asn-153 each coordinate substrate. ATP is bound at residue 173–174 (TD). The region spanning 280–358 (RGHVVIDAGA…GEIETVLGYM (79 aa)) is the PUA domain.

The protein belongs to the glutamate 5-kinase family.

Its subcellular location is the cytoplasm. The enzyme catalyses L-glutamate + ATP = L-glutamyl 5-phosphate + ADP. It functions in the pathway amino-acid biosynthesis; L-proline biosynthesis; L-glutamate 5-semialdehyde from L-glutamate: step 1/2. Its function is as follows. Catalyzes the transfer of a phosphate group to glutamate to form L-glutamate 5-phosphate. This Burkholderia vietnamiensis (strain G4 / LMG 22486) (Burkholderia cepacia (strain R1808)) protein is Glutamate 5-kinase.